A 165-amino-acid polypeptide reads, in one-letter code: Crossover junction endodeoxyribonuclease RuvC (165 aa).

Catalysis depends on residues D7, E67, and D140. Residues D7, E67, and D140 each contribute to the Mg(2+) site.

This sequence belongs to the RuvC family. In terms of assembly, homodimer which binds Holliday junction (HJ) DNA. The HJ becomes 2-fold symmetrical on binding to RuvC with unstacked arms; it has a different conformation from HJ DNA in complex with RuvA. In the full resolvosome a probable DNA-RuvA(4)-RuvB(12)-RuvC(2) complex forms which resolves the HJ. It depends on Mg(2+) as a cofactor.

Its subcellular location is the cytoplasm. It catalyses the reaction Endonucleolytic cleavage at a junction such as a reciprocal single-stranded crossover between two homologous DNA duplexes (Holliday junction).. In terms of biological role, the RuvA-RuvB-RuvC complex processes Holliday junction (HJ) DNA during genetic recombination and DNA repair. Endonuclease that resolves HJ intermediates. Cleaves cruciform DNA by making single-stranded nicks across the HJ at symmetrical positions within the homologous arms, yielding a 5'-phosphate and a 3'-hydroxyl group; requires a central core of homology in the junction. The consensus cleavage sequence is 5'-(A/T)TT(C/G)-3'. Cleavage occurs on the 3'-side of the TT dinucleotide at the point of strand exchange. HJ branch migration catalyzed by RuvA-RuvB allows RuvC to scan DNA until it finds its consensus sequence, where it cleaves and resolves the cruciform DNA. This Halothermothrix orenii (strain H 168 / OCM 544 / DSM 9562) protein is Crossover junction endodeoxyribonuclease RuvC.